The primary structure comprises 427 residues: Adenylosuccinate synthetase (427 aa).

GTP contacts are provided by residues 12–18 (GDEGKGK) and 40–42 (GHT). D13 serves as the catalytic Proton acceptor. Residues D13 and G40 each coordinate Mg(2+). Residues 13–16 (DEGK), 38–41 (NAGH), T130, R144, Q224, T239, and R303 each bind IMP. The active-site Proton donor is the H41. Position 299–305 (299–305 (VTTGRAR)) interacts with substrate. GTP is bound by residues R305, 331–333 (KID), and 413–415 (SVG).

It belongs to the adenylosuccinate synthetase family. As to quaternary structure, homodimer. Requires Mg(2+) as cofactor.

It is found in the cytoplasm. The catalysed reaction is IMP + L-aspartate + GTP = N(6)-(1,2-dicarboxyethyl)-AMP + GDP + phosphate + 2 H(+). It participates in purine metabolism; AMP biosynthesis via de novo pathway; AMP from IMP: step 1/2. Its function is as follows. Plays an important role in the de novo pathway of purine nucleotide biosynthesis. Catalyzes the first committed step in the biosynthesis of AMP from IMP. The protein is Adenylosuccinate synthetase of Clostridium novyi (strain NT).